Reading from the N-terminus, the 275-residue chain is MLQRSVFFLSDRTGITAETLGHSLLTQFDGIEWKKHYASFLDSAAKVQEIIDRINTIAKQEGQPSLVFSTLLDPVILASVRQADCYLIDFFESCLGVLETALQQSPVRIPGRSHILGQDASYFRRIAAIQYALNSDDGSNSKILADADVILVGVSRSGKTPVCVYLALQYGVLAANYPFTPEDMGVVRLPSLLQPLREKLFGLTLSTSRLQAVRVERYPGSHYASFVECQRELQWQNELYQQFNIPFIDTTGVSIEEISASIINRMRLERRLYGT.

Position 153–160 (153–160 (GVSRSGKT)) interacts with ADP.

Belongs to the pyruvate, phosphate/water dikinase regulatory protein family. PSRP subfamily.

It carries out the reaction [pyruvate, water dikinase] + ADP = [pyruvate, water dikinase]-phosphate + AMP + H(+). It catalyses the reaction [pyruvate, water dikinase]-phosphate + phosphate + H(+) = [pyruvate, water dikinase] + diphosphate. In terms of biological role, bifunctional serine/threonine kinase and phosphorylase involved in the regulation of the phosphoenolpyruvate synthase (PEPS) by catalyzing its phosphorylation/dephosphorylation. The sequence is that of Putative phosphoenolpyruvate synthase regulatory protein from Nitrosomonas eutropha (strain DSM 101675 / C91 / Nm57).